Here is a 346-residue protein sequence, read N- to C-terminus: tRNA/tmRNA (uracil-C(5))-methyltransferase (346 aa).

Residues Gln-168, Tyr-197, Asn-202, Glu-218, and Asp-278 each coordinate S-adenosyl-L-methionine. Cys-303 serves as the catalytic Nucleophile. Glu-337 acts as the Proton acceptor in catalysis.

Belongs to the class I-like SAM-binding methyltransferase superfamily. RNA M5U methyltransferase family. TrmA subfamily.

The catalysed reaction is uridine(54) in tRNA + S-adenosyl-L-methionine = 5-methyluridine(54) in tRNA + S-adenosyl-L-homocysteine + H(+). The enzyme catalyses uridine(341) in tmRNA + S-adenosyl-L-methionine = 5-methyluridine(341) in tmRNA + S-adenosyl-L-homocysteine + H(+). In terms of biological role, dual-specificity methyltransferase that catalyzes the formation of 5-methyluridine at position 54 (m5U54) in all tRNAs, and that of position 341 (m5U341) in tmRNA (transfer-mRNA). The sequence is that of tRNA/tmRNA (uracil-C(5))-methyltransferase from Campylobacter lari (strain RM2100 / D67 / ATCC BAA-1060).